Consider the following 686-residue polypeptide: Hexamerin 70c (686 aa).

The N-terminal stretch at Met1–Gly19 is a signal peptide. One can recognise a Hemocyanin N-terminal domain in the interval Phe32–Lys155. The 271-residue stretch at Ala161–Phe431 folds into the Hemocyanin middle domain. Residues Asn205 and Asn662 are each glycosylated (N-linked (GlcNAc...) asparagine). Residues Gln440–Tyr676 form the Hemocyanin C-terminal domain.

The protein belongs to the hemocyanin/hexamerin family. As to quaternary structure, probable homohexamer. In terms of tissue distribution, expressed in the fat body and secreted into the hemolymph (at protein level). Present in trophocytes and oenocytes of the fat body (at protein level). Not expressed in ovary or testis.

Its subcellular location is the secreted. The protein resides in the nucleus. It is found in the cytoplasm. It localises to the cytoplasmic granule. Functionally, storage protein that may function as a nutrient supply to compensate for lack of dietary proteins during metamorphosis and egg production. The protein is Hexamerin 70c of Apis mellifera (Honeybee).